The sequence spans 744 residues: MDHAEENEIPAETQRYYVERPIFSHPVLQERLHVKDKVTESIGDKLKQAFTCTPKKIRNIIYMFLPITKWLPAYKFKEYVLGDLVSGISTGVLQLPQGLAFAMLAAVPPVFGLYSSFYPVIMYCFFGTSRHISIGPFAVISLMIGGVAVRLVPDDIVIPGGVNATNGTEARDALRVKVAMSVTLLSGIIQFCLGVCRFGFVAIYLTEPLVRGFTTAAAVHVFTSMLKYLFGVKTKRYSGIFSVVYSTVAVLQNVKNLNVCSLGVGLMVFGLLLGGKEFNERFKEKLPAPIPLEFFAVVMGTGISAGFNLHESYSVDVVGTLPLGLLPPANPDTSLFHLVYVDAIAIAIVGFSVTISMAKTLANKHGYQVDGNQELIALGICNSIGSLFQTFSISCSLSRSLVQEGTGGKTQLAGCLASLMILLVILATGFLFESLPQAVLSAIVIVNLKGMFMQFSDLPFFWRTSKIELTIWLTTFVSSLFLGLDYGLITAVIIALLTVIYRTQSPSYKVLGQLPDTDVYIDIDAYEEVKEIPGIKIFQINAPIYYANSDLYSSALKRKTGVNPALIMGARRKAMRKYAKEVGNANVANATVVKVDAEVDGENATKPEEEDDEVKFPPIVIKTTFPEELQRFLPQGENVHTVILDFTQVNFVDSVGVKTLAGIVKEYGDVGIYVYLAGCSPQVVNDLTRNNFFENPALKELLFHSIHDAVLGSQVREAMAEQEATASLPQEDMEPNATPTTPEA.

Residues 1–75 are Cytoplasmic-facing; the sequence is MDHAEENEIP…PITKWLPAYK (75 aa). A helical transmembrane segment spans residues 76 to 105; it reads FKEYVLGDLVSGISTGVLQLPQGLAFAMLA. Residues 106–108 lie on the Extracellular side of the membrane; sequence AVP. The helical transmembrane segment at 109-126 threads the bilayer; it reads PVFGLYSSFYPVIMYCFF. Over 127–137 the chain is Cytoplasmic; sequence GTSRHISIGPF. The helical transmembrane segment at 138–151 threads the bilayer; that stretch reads AVISLMIGGVAVRL. The Extracellular portion of the chain corresponds to 152-168; that stretch reads VPDDIVIPGGVNATNGT. The short motif at 158–168 is the Involved in motor function element; it reads IPGGVNATNGT. N-linked (GlcNAc...) asparagine glycans are attached at residues Asn163 and Asn166. Residues 169–196 form a helical membrane-spanning segment; sequence EARDALRVKVAMSVTLLSGIIQFCLGVC. At 197-206 the chain is on the cytoplasmic side; the sequence is RFGFVAIYLT. Residues 207-230 traverse the membrane as a helical segment; sequence EPLVRGFTTAAAVHVFTSMLKYLF. Topologically, residues 231 to 241 are extracellular; it reads GVKTKRYSGIF. An intramembrane region (helical) is located at residues 242-253; that stretch reads SVVYSTVAVLQN. Topologically, residues 254–258 are extracellular; sequence VKNLN. A helical transmembrane segment spans residues 259–282; that stretch reads VCSLGVGLMVFGLLLGGKEFNERF. At 283-291 the chain is on the cytoplasmic side; sequence KEKLPAPIP. Residues 292–307 traverse the membrane as a helical segment; it reads LEFFAVVMGTGISAGF. Topologically, residues 308 to 332 are extracellular; that stretch reads NLHESYSVDVVGTLPLGLLPPANPD. A helical membrane pass occupies residues 333 to 367; the sequence is TSLFHLVYVDAIAIAIVGFSVTISMAKTLANKHGY. Residues 368–370 lie on the Cytoplasmic side of the membrane; that stretch reads QVD. Residues 371–388 traverse the membrane as a helical segment; sequence GNQELIALGICNSIGSLF. The Extracellular portion of the chain corresponds to 389-396; that stretch reads QTFSISCS. Residues 397–406 traverse the membrane as a helical segment; that stretch reads LSRSLVQEGT. Residue Ser398 coordinates salicylate. At 407–410 the chain is on the cytoplasmic side; sequence GGKT. A helical membrane pass occupies residues 411 to 432; the sequence is QLAGCLASLMILLVILATGFLF. Topologically, residues 433 to 436 are extracellular; that stretch reads ESLP. The helical transmembrane segment at 437–464 threads the bilayer; that stretch reads QAVLSAIVIVNLKGMFMQFSDLPFFWRT. Ser465 is a topological domain (cytoplasmic). A helical membrane pass occupies residues 466–481; sequence KIELTIWLTTFVSSLF. The Extracellular portion of the chain corresponds to 482–483; the sequence is LG. A helical transmembrane segment spans residues 484–504; the sequence is LDYGLITAVIIALLTVIYRTQ. The extended region for STAS domain stretch occupies residues 505–718; that stretch reads SPSYKVLGQL…AVLGSQVREA (214 aa). Residues 505–744 are Cytoplasmic-facing; the sequence is SPSYKVLGQL…PNATPTTPEA (240 aa). Residues 525 to 713 enclose the STAS domain; that stretch reads AYEEVKEIPG…HSIHDAVLGS (189 aa). The interval 720–744 is disordered; it reads AEQEATASLPQEDMEPNATPTTPEA.

The protein belongs to the SLC26A/SulP transporter (TC 2.A.53) family. Homodimer. Interacts (via STAS domain) with CALM; this interaction is calcium-dependent and the STAS domain interacts with only one lobe of CALM which is an elongated conformation. Interacts with MYH1. As to expression, expressed in the outer hair cells (OHC) of the organ of Corti of the inner ear. Also weak expression in brain and testis. Very weakly expressed in heart, spleen, muscle and lactating mammary glands. Expressed in cardiac myocytes (at protein level), both in the surface sarcolemma and along the t-tubule. Weakly expressed in skeletal muscle cells (at protein level).

Its subcellular location is the lateral cell membrane. The enzyme catalyses 2 hydrogencarbonate(in) + chloride(out) = 2 hydrogencarbonate(out) + chloride(in). Voltage-sensitive motor protein that drives outer hair cell (OHC) electromotility (eM) and participates in sound amplification in the hearing organ. Converts changes in the transmembrane electric potential into mechanical displacements resulting in the coupling of its expansion to movement of a charged voltage sensor across the lipid membrane. The nature of the voltage sensor is not completely clear, and two models compete. In the first model, acts as an incomplete transporter where intracellular chloride anion acts as extrinsic voltage sensor that drives conformational change in the protein which is sufficient to produce a length change in the plane of the membrane and hence in the length of the OHC. The second model in which multiple charged amino acid residues are distributed at the intracellular and extracellular membrane interfaces that form an intrinsic voltage sensor, whose movement produces the non-linear capacitance (NLC). However, the effective voltage sensor may be the result of a hybrid voltage sensor, assembled from intrinsic charge (charged residues) and extrinsic charge (bound anion). Notably, binding of anions to the anion-binding pocket partially neutralizes the intrinsic positive charge rather than to form an electrically negative sensor, therefore remaining charge may serve as voltage sensor that, after depolarization, moves from down (expanded state) to up (contracted) conformation, which is accompanied by an eccentric contraction of the intermembrane cross-sectional area of the protein as well as a major increase in the hydrophobic thickness of the protein having as consequences the plasma membrane thickening and the cell contraction after membrane depolarization. The anion-binding pocket transits from the inward-open (Down) state, where it is exposed toward the intracellular solvent in the absence of anion, to the occluded (Up) state upon anion binding. Salicylate competes for the anion-binding site and inhibits the voltage-sensor movement, and therefore inhibits the charge transfer and electromotility by displacing Cl(-) from the anion-binding site and by preventing the structural transitions to the contracted state. In addition, can act as a weak Cl(-)/HCO3(-) antiporter across the cell membrane and so regulate the intracellular pH of the outer hair cells (OHCs), while firstly found as being unable to mediate electrogenic anion transport. Moreover, supports a role in cardiac mechanical amplification serving as an elastic element to enhance the actomyosin- based sarcomere contraction system. The sequence is that of Prestin from Mus musculus (Mouse).